We begin with the raw amino-acid sequence, 238 residues long: Probable transcriptional regulatory protein YeeN (238 aa).

It belongs to the TACO1 family. YeeN subfamily.

The protein localises to the cytoplasm. In Escherichia coli (strain UTI89 / UPEC), this protein is Probable transcriptional regulatory protein YeeN.